A 398-amino-acid polypeptide reads, in one-letter code: Phosphoglycerate kinase (398 aa).

Substrate contacts are provided by residues 21 to 23 (DFN), arginine 36, 59 to 62 (HLGR), arginine 119, and arginine 157. Residues lysine 208, glycine 296, glutamate 327, and 354 to 357 (GGDS) each bind ATP.

It belongs to the phosphoglycerate kinase family. As to quaternary structure, monomer.

Its subcellular location is the cytoplasm. The enzyme catalyses (2R)-3-phosphoglycerate + ATP = (2R)-3-phospho-glyceroyl phosphate + ADP. It participates in carbohydrate degradation; glycolysis; pyruvate from D-glyceraldehyde 3-phosphate: step 2/5. The protein is Phosphoglycerate kinase of Streptococcus uberis (strain ATCC BAA-854 / 0140J).